Reading from the N-terminus, the 772-residue chain is Protocadherin beta-6 (772 aa).

Positions 1-28 (METTLAKTPEKRQVVFLAILLLLWEAGS) are cleaved as a signal peptide. 5 consecutive Cadherin domains span residues 31-133 (IRYS…SPEF), 134-242 (PDTE…APEF), 243-346 (VQSL…APKL), 347-450 (TISS…APAF), and 451-560 (TQTS…APFI). The Extracellular portion of the chain corresponds to 31-690 (IRYSIPEETE…QDEDMLTLYL (660 aa)). A disulfide bridge connects residues cysteine 96 and cysteine 102. Asparagine 169 is a glycosylation site (N-linked (GlcNAc...) asparagine). Serine 223 is a glycosylation site (O-linked (Man) serine). Threonine 225 carries an O-linked (Man) threonine glycan. N-linked (GlcNAc...) asparagine glycosylation is present at asparagine 417. An N-linked (GlcNAc...) asparagine glycan is attached at asparagine 566. In terms of domain architecture, Cadherin 6 spans 575 to 675 (LPRAAEPGYL…SQPYLPLPEV (101 aa)). A helical membrane pass occupies residues 691–711 (VIALASVSSLFLLSVLLFVGV). The Cytoplasmic segment spans residues 712-772 (RLCRRVREAS…DFKFLNHYSQ (61 aa)).

In terms of assembly, forms homodimers in trans (molecules expressed by two different cells). Forms promiscuous heterodimers in cis (at the plasma membrane of the same cell) with other protocadherins.

It localises to the cell membrane. Its function is as follows. Calcium-dependent cell-adhesion protein involved in cells self-recognition and non-self discrimination. Thereby, it is involved in the establishment and maintenance of specific neuronal connections in the brain. This Mus musculus (Mouse) protein is Protocadherin beta-6.